The following is a 717-amino-acid chain: Polyribonucleotide nucleotidyltransferase (717 aa).

Mg(2+) contacts are provided by aspartate 486 and aspartate 492. The region spanning 553–612 (PKIIQLQIDIDKISLVIGSTGKTVKAITDEFEVRVQIEQDGRITLFGTDSLKMQKAKARI) is the KH domain. Residues 622–715 (GEIYEGVVKK…KFGKIELELV (94 aa)) enclose the S1 motif domain. Positions 650–683 (SNRPKSRDDRYGDMRHSRYGSGRHSRYGRDSRNT) are disordered. Residues 654–665 (KSRDDRYGDMRH) are compositionally biased toward basic and acidic residues. The span at 666–675 (SRYGSGRHSR) shows a compositional bias: basic residues.

The protein belongs to the polyribonucleotide nucleotidyltransferase family. Requires Mg(2+) as cofactor.

The protein resides in the cytoplasm. It carries out the reaction RNA(n+1) + phosphate = RNA(n) + a ribonucleoside 5'-diphosphate. Involved in mRNA degradation. Catalyzes the phosphorolysis of single-stranded polyribonucleotides processively in the 3'- to 5'-direction. The chain is Polyribonucleotide nucleotidyltransferase from Borrelia turicatae (strain 91E135).